An 85-amino-acid chain; its full sequence is ATP synthase subunit c (85 aa).

Transmembrane regions (helical) follow at residues 10–30 (IAVA…FGLL) and 53–73 (FIVA…ALFF).

The protein belongs to the ATPase C chain family. F-type ATPases have 2 components, F(1) - the catalytic core - and F(0) - the membrane proton channel. F(1) has five subunits: alpha(3), beta(3), gamma(1), delta(1), epsilon(1). F(0) has three main subunits: a(1), b(2) and c(10-14). The alpha and beta chains form an alternating ring which encloses part of the gamma chain. F(1) is attached to F(0) by a central stalk formed by the gamma and epsilon chains, while a peripheral stalk is formed by the delta and b chains.

It localises to the cell inner membrane. In terms of biological role, f(1)F(0) ATP synthase produces ATP from ADP in the presence of a proton or sodium gradient. F-type ATPases consist of two structural domains, F(1) containing the extramembraneous catalytic core and F(0) containing the membrane proton channel, linked together by a central stalk and a peripheral stalk. During catalysis, ATP synthesis in the catalytic domain of F(1) is coupled via a rotary mechanism of the central stalk subunits to proton translocation. Functionally, key component of the F(0) channel; it plays a direct role in translocation across the membrane. A homomeric c-ring of between 10-14 subunits forms the central stalk rotor element with the F(1) delta and epsilon subunits. In Pseudomonas aeruginosa (strain LESB58), this protein is ATP synthase subunit c.